A 67-amino-acid chain; its full sequence is Protein LITTLE ZIPPER 3 (67 aa).

A coiled-coil region spans residues 14-59 (YIMKENERLRKKAELLNQENQQLLFQLKQKLSKTKNSNNGSNNDNK). The segment at 42–67 (QKLSKTKNSNNGSNNDNKSSSASGQS) is disordered.

Interacts with REV. Interacts with ATBH-8, ATBH-9, ATB-14 and ATB-15. Expressed in the adaxial epidermis of the cotyledons and leaves, and in the vascular cylinder of wild-type torpedo stage embryos. Confined in the central zone and the organizing center in the shoot apical meristem.

Its subcellular location is the nucleus. Competitive inhibitor of the HD-ZIPIII transcription factors in shoot apical meristem (SAM) development. Acts by forming non-functional heterodimers. Part of a negative feedback loop. Involved in SAM development and lateral organ patterning. Essential for proper functioning of stem cells in the SAM. The sequence is that of Protein LITTLE ZIPPER 3 from Arabidopsis thaliana (Mouse-ear cress).